The sequence spans 124 residues: Fluoride-specific ion channel FluC (124 aa).

Transmembrane regions (helical) follow at residues 4 to 24 (IVAI…LAGW), 32 to 52 (GFPY…GLIM), 67 to 87 (IGLT…SYET), and 96 to 116 (FITA…CTWL). Residues G75 and T78 each contribute to the Na(+) site.

Belongs to the fluoride channel Fluc/FEX (TC 1.A.43) family.

It is found in the cell inner membrane. It carries out the reaction fluoride(in) = fluoride(out). Na(+) is not transported, but it plays an essential structural role and its presence is essential for fluoride channel function. In terms of biological role, fluoride-specific ion channel. Important for reducing fluoride concentration in the cell, thus reducing its toxicity. The protein is Fluoride-specific ion channel FluC of Geobacter metallireducens (strain ATCC 53774 / DSM 7210 / GS-15).